The sequence spans 462 residues: Chitinase 1 (462 aa).

The N-terminal stretch at 1–17 (MILNLIILLAISIVASA) is a signal peptide. The GH18 domain maps to 18–291 (SNIAAYWGQN…NQLHQALSGS (274 aa)). N57 carries N-linked (GlcNAc...) asparagine glycosylation. The active-site Proton donor is the E147.

The protein belongs to the glycosyl hydrolase 18 family. Chitinase class V subfamily.

It localises to the secreted. It carries out the reaction Random endo-hydrolysis of N-acetyl-beta-D-glucosaminide (1-&gt;4)-beta-linkages in chitin and chitodextrins.. In terms of biological role, chitinase involved in the remodeling of chitin in the fungal cell wall. Plays a role in cell separation. The protein is Chitinase 1 (CHT1) of Candida albicans (strain SC5314 / ATCC MYA-2876) (Yeast).